We begin with the raw amino-acid sequence, 180 residues long: uncharacterized protein (180 aa).

The disordered stretch occupies residues 1 to 31; it reads MSTYEEEHGIQQNSRDYQEVGGTSQEEQRRQ. N-acetylserine is present on Ser2. An RING-type zinc finger spans residues 109–153; it reads CSICYTNYLEDEYPLVVELPHCHHKFDLECLSVWLSRSTTCPLCR.

This is an uncharacterized protein from Saccharomyces cerevisiae (strain ATCC 204508 / S288c) (Baker's yeast).